We begin with the raw amino-acid sequence, 189 residues long: Ribosome maturation factor RimM (189 aa).

The PRC barrel domain occupies 118 to 189; sequence SGEYYWDDLI…IILVDWDENF (72 aa).

The protein belongs to the RimM family. Binds ribosomal protein uS19.

Its subcellular location is the cytoplasm. An accessory protein needed during the final step in the assembly of 30S ribosomal subunit, possibly for assembly of the head region. Essential for efficient processing of 16S rRNA. May be needed both before and after RbfA during the maturation of 16S rRNA. It has affinity for free ribosomal 30S subunits but not for 70S ribosomes. This chain is Ribosome maturation factor RimM, found in Ruthia magnifica subsp. Calyptogena magnifica.